The primary structure comprises 356 residues: tRNA N6-adenosine threonylcarbamoyltransferase (356 aa).

Residues histidine 111 and histidine 115 each contribute to the Fe cation site. Substrate is bound by residues 143 to 147, aspartate 178, glycine 191, aspartate 195, and asparagine 286; that span reads LASGG. Residue aspartate 314 coordinates Fe cation.

Belongs to the KAE1 / TsaD family. It depends on Fe(2+) as a cofactor.

It localises to the cytoplasm. The enzyme catalyses L-threonylcarbamoyladenylate + adenosine(37) in tRNA = N(6)-L-threonylcarbamoyladenosine(37) in tRNA + AMP + H(+). Required for the formation of a threonylcarbamoyl group on adenosine at position 37 (t(6)A37) in tRNAs that read codons beginning with adenine. Is involved in the transfer of the threonylcarbamoyl moiety of threonylcarbamoyl-AMP (TC-AMP) to the N6 group of A37, together with TsaE and TsaB. TsaD likely plays a direct catalytic role in this reaction. In Sorangium cellulosum (strain So ce56) (Polyangium cellulosum (strain So ce56)), this protein is tRNA N6-adenosine threonylcarbamoyltransferase.